Here is an 86-residue protein sequence, read N- to C-terminus: Large ribosomal subunit protein bL31B (86 aa).

Belongs to the bacterial ribosomal protein bL31 family. Type B subfamily. Part of the 50S ribosomal subunit.

The polypeptide is Large ribosomal subunit protein bL31B (Yersinia enterocolitica serotype O:8 / biotype 1B (strain NCTC 13174 / 8081)).